We begin with the raw amino-acid sequence, 1582 residues long: Dynein axonemal assembly factor 1 homolog (1582 aa).

6 LRR repeats span residues 38–60 (RLNDVLYLHFQGYQCIENLDEYT), 61–82 (ELKSLWLESNAISEIQNLTKLT), 83–104 (KLKCLYLQNNLITKMENLEFNR), 105–126 (ELDTLNLSQNHIRKIENIGTDI), 129–150 (VLNTLNITSNYLTDSASLAALV), and 154–175 (TLSVLDLSNNRIDDILIVKIFE). Residues 189–227 (PVVSRLPQYRKTLILACKELTYLDSRPVFPRDRACAEAW) enclose the LRRCT domain. Disordered regions lie at residues 245–420 (AERR…SEMD), 560–587 (SSDVQEQAKDPSESDEEPTEEEMEVKSQ), 859–878 (FSKDTPESLDAQLAKDEDRR), 913–942 (DTGELEELPPPPELISDSESEKEVEEDDDA), 1073–1092 (SSNEDLEAKHKSNDDPLVER), 1101–1137 (MQRMKEHEERARELQEQLEKEKEEENSGPIKLSMGEG), 1150–1218 (TEII…QAEG), 1305–1345 (KDNE…TAKD), 1358–1438 (LDPE…PYQT), 1484–1517 (EDSKIGDGPTEKFLDQKAQDNTENTDERPENPKN), and 1529–1548 (PSESLEDTEATETPEVSTEQ). Positions 313–327 (ESQASEHSTTSSTSA) are enriched in low complexity. The segment covering 339–392 (HIAERISNRRVKPLEGRPKVLYDEAASGDEKAVTTTDSKKDSNAEDLPELKDIT) has biased composition (basic and acidic residues). The segment covering 409–420 (TLLQSDSGSEMD) has biased composition (polar residues). The segment covering 572 to 582 (ESDEEPTEEEM) has biased composition (acidic residues). Residues 928-942 (SDSESEKEVEEDDDA) show a composition bias toward acidic residues. 2 stretches are compositionally biased toward basic and acidic residues: residues 1078-1092 (LEAKHKSNDDPLVER) and 1103-1125 (RMKEHEERARELQEQLEKEKEEE). Positions 1166-1178 (EGGAQQEEGGAQS) are enriched in low complexity. Basic and acidic residues-rich tracts occupy residues 1321–1335 (PKEEHIPEVKSETET), 1398–1427 (SALKETTEIGDSEKQENKTQDETLDPKDTE), and 1484–1514 (EDSKIGDGPTEKFLDQKAQDNTENTDERPEN). Over residues 1529 to 1540 (PSESLEDTEATE) the composition is skewed to acidic residues.

Belongs to the DNAAF1 family.

The protein resides in the cell projection. The protein localises to the cilium. In terms of biological role, cilium-specific protein required for cilia structures. The protein is Dynein axonemal assembly factor 1 homolog (dtr) of Drosophila pseudoobscura pseudoobscura (Fruit fly).